A 346-amino-acid polypeptide reads, in one-letter code: Uroporphyrinogen decarboxylase (346 aa).

Substrate contacts are provided by residues 23–27 (RQAGR), Asp-73, Tyr-151, Ser-206, and His-321.

The protein belongs to the uroporphyrinogen decarboxylase family. As to quaternary structure, homodimer.

The protein localises to the cytoplasm. The catalysed reaction is uroporphyrinogen III + 4 H(+) = coproporphyrinogen III + 4 CO2. It functions in the pathway porphyrin-containing compound metabolism; protoporphyrin-IX biosynthesis; coproporphyrinogen-III from 5-aminolevulinate: step 4/4. Functionally, catalyzes the decarboxylation of four acetate groups of uroporphyrinogen-III to yield coproporphyrinogen-III. This chain is Uroporphyrinogen decarboxylase, found in Sulfurovum sp. (strain NBC37-1).